We begin with the raw amino-acid sequence, 122 residues long: Large ribosomal subunit protein uL14 (122 aa).

The protein belongs to the universal ribosomal protein uL14 family. Part of the 50S ribosomal subunit. Forms a cluster with proteins L3 and L19. In the 70S ribosome, L14 and L19 interact and together make contacts with the 16S rRNA in bridges B5 and B8.

Binds to 23S rRNA. Forms part of two intersubunit bridges in the 70S ribosome. This Geotalea daltonii (strain DSM 22248 / JCM 15807 / FRC-32) (Geobacter daltonii) protein is Large ribosomal subunit protein uL14.